Consider the following 74-residue polypeptide: Large ribosomal subunit protein bL27c (74 aa).

Belongs to the bacterial ribosomal protein bL27 family.

The protein resides in the plastid. It localises to the chloroplast. In Calyptrosphaera sphaeroidea, this protein is Large ribosomal subunit protein bL27c (rpl27).